The primary structure comprises 348 residues: 11-beta-hydroxysteroid dehydrogenase A (348 aa).

A helical; Signal-anchor for type II membrane protein membrane pass occupies residues 10 to 30 (LIAPPFTFFFLLFFLPPFQIF). The Proline-knob motif lies at 13–26 (PPFTFFFLLFFLPP). NADP(+)-binding positions include 54–80 (GASS…AARR), aspartate 105, and 132–135 (NAGI). A substrate-binding site is contributed by serine 184. Tyrosine 197 (proton acceptor) is an active-site residue. NADP(+) contacts are provided by residues 197-201 (YNASK) and lysine 201.

This sequence belongs to the short-chain dehydrogenases/reductases (SDR) family. As to expression, expressed in seeds (at protein level). Not expressed in stem, leaf or root (at protein level).

The protein localises to the lipid droplet. It localises to the membrane. The catalysed reaction is an 11beta-hydroxysteroid + NADP(+) = an 11-oxosteroid + NADPH + H(+). It carries out the reaction an 11beta-hydroxysteroid + NAD(+) = an 11-oxosteroid + NADH + H(+). The enzyme catalyses corticosterone + NADP(+) = 11-dehydrocorticosterone + NADPH + H(+). It catalyses the reaction corticosterone + NAD(+) = 11-dehydrocorticosterone + NADH + H(+). The catalysed reaction is 17beta-estradiol + NADP(+) = estrone + NADPH + H(+). It carries out the reaction 17beta-estradiol + NAD(+) = estrone + NADH + H(+). Has dehydrogenase activity against corticosterone (11 beta-hydroxysteroid) and estradiol (17 beta-hydroxysteroid), with higher activity against estradiol. Possesses higher dehydrogenase activity with NADP(+) than NAD(+) regardless of the sterol substrate. May be involved in signal transduction regulated by various sterols. The chain is 11-beta-hydroxysteroid dehydrogenase A from Sesamum indicum (Oriental sesame).